We begin with the raw amino-acid sequence, 317 residues long: Phospho-N-acetylmuramoyl-pentapeptide-transferase (317 aa).

A run of 9 helical transmembrane segments spans residues 3 to 23 (VIIY…PLFI), 48 to 68 (GTPT…MIIM), 72 to 92 (LNSN…IGLI), 112 to 132 (FLLQ…RFGS), 141 to 161 (ITWT…FVAV), 171 to 191 (LDGL…VVSF), 193 to 213 (WHQY…LGFL), 238 to 258 (AIAL…IYVI), and 297 to 317 (VVSV…LSLI).

Belongs to the glycosyltransferase 4 family. MraY subfamily. Mg(2+) is required as a cofactor.

It is found in the cell membrane. It catalyses the reaction UDP-N-acetyl-alpha-D-muramoyl-L-alanyl-gamma-D-glutamyl-meso-2,6-diaminopimeloyl-D-alanyl-D-alanine + di-trans,octa-cis-undecaprenyl phosphate = di-trans,octa-cis-undecaprenyl diphospho-N-acetyl-alpha-D-muramoyl-L-alanyl-D-glutamyl-meso-2,6-diaminopimeloyl-D-alanyl-D-alanine + UMP. It functions in the pathway cell wall biogenesis; peptidoglycan biosynthesis. In terms of biological role, catalyzes the initial step of the lipid cycle reactions in the biosynthesis of the cell wall peptidoglycan: transfers peptidoglycan precursor phospho-MurNAc-pentapeptide from UDP-MurNAc-pentapeptide onto the lipid carrier undecaprenyl phosphate, yielding undecaprenyl-pyrophosphoryl-MurNAc-pentapeptide, known as lipid I. The sequence is that of Phospho-N-acetylmuramoyl-pentapeptide-transferase from Clostridium acetobutylicum (strain ATCC 824 / DSM 792 / JCM 1419 / IAM 19013 / LMG 5710 / NBRC 13948 / NRRL B-527 / VKM B-1787 / 2291 / W).